A 627-amino-acid chain; its full sequence is Chaperone protein DnaK (627 aa).

Thr-197 bears the Phosphothreonine; by autocatalysis mark. A compositionally biased stretch (polar residues) spans 602-611; it reads ENQHSEANTV. The disordered stretch occupies residues 602-627; the sequence is ENQHSEANTVNDEKVVDADFQDVDKK. A compositionally biased stretch (basic and acidic residues) spans 612–627; sequence NDEKVVDADFQDVDKK.

It belongs to the heat shock protein 70 family.

Its function is as follows. Acts as a chaperone. The protein is Chaperone protein DnaK of Rickettsia felis (strain ATCC VR-1525 / URRWXCal2) (Rickettsia azadi).